A 303-amino-acid polypeptide reads, in one-letter code: Pycsar effector protein XpPycTIR (303 aa).

Residue Leu14–Arg138 participates in a nucleoside 3',5'-cyclic phosphate binding. Positions Arg154 to Tyr273 are TIR-like.

It localises to the cytoplasm. It carries out the reaction NAD(+) + H2O = ADP-D-ribose + nicotinamide + H(+). Pycsar (pyrimidine cyclase system for antiphage resistance) provides immunity against bacteriophage. The pyrimidine cyclase (PycC) synthesizes cyclic nucleotides in response to infection; these serve as specific second messenger signals. The signals activate the adjacent effector, leading to bacterial cell death and abortive phage infection. A clade B Pycsar system. Functionally, the effector gene of a two-gene Pycsar system. Expression of this and adjacent uridylate cyclase XpPycC (AC P0DV28) confers resistance to bacteriophage T7. When cells expressing the Pycsar system are infected by phage T7 at low multiplicity of infection (0.2 MOI) the culture survivey, at 2.0 MOI bacteria enter growth arrest. The same cells enter growth arrest after exposure to 2.5 mM cUMP but not cCMP; the effector protein responds only to the cUMP usually produced by its cognate NTP cyclase. NAD(+) levels in infected cells are depleted between 5 and 10 minutes after infection with T7 at MOI of 2. Probably only responds to cUMP. This chain is Pycsar effector protein XpPycTIR, found in Xanthomonas perforans.